Here is a 199-residue protein sequence, read N- to C-terminus: Peptidyl-tRNA hydrolase (199 aa).

Y25 provides a ligand contact to tRNA. H30 serves as the catalytic Proton acceptor. TRNA is bound by residues Y76, N78, and N124.

The protein belongs to the PTH family. As to quaternary structure, monomer.

The protein localises to the cytoplasm. It catalyses the reaction an N-acyl-L-alpha-aminoacyl-tRNA + H2O = an N-acyl-L-amino acid + a tRNA + H(+). Its function is as follows. Hydrolyzes ribosome-free peptidyl-tRNAs (with 1 or more amino acids incorporated), which drop off the ribosome during protein synthesis, or as a result of ribosome stalling. In terms of biological role, catalyzes the release of premature peptidyl moieties from peptidyl-tRNA molecules trapped in stalled 50S ribosomal subunits, and thus maintains levels of free tRNAs and 50S ribosomes. The polypeptide is Peptidyl-tRNA hydrolase (Mycobacterium leprae (strain Br4923)).